We begin with the raw amino-acid sequence, 309 residues long: 11-beta-hydroxysteroid dehydrogenase-like 3 (309 aa).

The helical; Signal-anchor for type II membrane protein transmembrane segment at 10–30 (LLLPPLTIIFLFLFYPFYLLI) threads the bilayer. NADP(+) contacts are provided by residues 54–80 (GASSGIGEHVAYEYAKKGAYLALVARR) and Asp105. Residue Ser184 coordinates substrate. Residue Tyr197 is the Proton acceptor of the active site. Residues 197–201 (YAASK) and Lys201 each bind NADP(+).

It belongs to the short-chain dehydrogenases/reductases (SDR) family.

The protein localises to the membrane. The polypeptide is 11-beta-hydroxysteroid dehydrogenase-like 3 (HSD3) (Arabidopsis thaliana (Mouse-ear cress)).